A 146-amino-acid polypeptide reads, in one-letter code: Prostaglandin E synthase 3 (146 aa).

Positions 1 to 76 constitute a CS domain; sequence VFIEFCVEDS…ESGQAWPRLT (76 aa). The tract at residues 110 to 146 is disordered; that stretch reads SEMMNNMGGDDDVDLPEVDGADDDSPDSDDEKMPDLE. Acidic residues predominate over residues 118–139; it reads GDDDVDLPEVDGADDDSPDSDD.

This sequence belongs to the p23/wos2 family. Binds to telomerase. Binds to the progesterone receptor.

The protein localises to the cytoplasm. The catalysed reaction is prostaglandin H2 = prostaglandin E2. Its pathway is lipid metabolism; prostaglandin biosynthesis. Its function is as follows. Molecular chaperone. The chain is Prostaglandin E synthase 3 (PTGES3) from Gallus gallus (Chicken).